The sequence spans 163 residues: Epithelial membrane protein 3 (163 aa).

A helical membrane pass occupies residues 4 to 24; the sequence is LLLVVSALHILILVLLFVATL. 2 N-linked (GlcNAc...) asparagine glycosylation sites follow: N46 and N56. 3 helical membrane-spanning segments follow: residues 66–86, 100–120, and 139–159; these read VQALMVLSLILCCLSFILFMI, TGLCQLCTSAAVFSGALIYAI, and FALAWVAFPLALVSGIIYIHL.

This sequence belongs to the PMP-22/EMP/MP20 family.

The protein resides in the membrane. Its function is as follows. Probably involved in cell proliferation and cell-cell interactions. The chain is Epithelial membrane protein 3 (Emp3) from Rattus norvegicus (Rat).